Consider the following 196-residue polypeptide: Glycerol-3-phosphate acyltransferase (196 aa).

The next 6 helical transmembrane spans lie at 5-25, 53-73, 80-100, 107-127, 130-150, and 153-173; these read VYLL…IIFC, FSAL…VLLA, PSEI…PLFF, GVAT…AAGL, WLIV…TALI, and FYIW…CCLL.

It belongs to the PlsY family. Probably interacts with PlsX.

It localises to the cell inner membrane. The catalysed reaction is an acyl phosphate + sn-glycerol 3-phosphate = a 1-acyl-sn-glycero-3-phosphate + phosphate. Its pathway is lipid metabolism; phospholipid metabolism. Catalyzes the transfer of an acyl group from acyl-phosphate (acyl-PO(4)) to glycerol-3-phosphate (G3P) to form lysophosphatidic acid (LPA). This enzyme utilizes acyl-phosphate as fatty acyl donor, but not acyl-CoA or acyl-ACP. This is Glycerol-3-phosphate acyltransferase from Actinobacillus pleuropneumoniae serotype 7 (strain AP76).